The following is a 388-amino-acid chain: Succinate--CoA ligase [ADP-forming] subunit beta (388 aa).

Residues 9 to 244 (KSLFAEYGLP…PSQDDAREAH (236 aa)) form the ATP-grasp domain. ATP is bound by residues Lys-46, 53–55 (GRG), Glu-99, Thr-102, and Glu-107. 2 residues coordinate Mg(2+): Asn-199 and Asp-213. Residues Asn-264 and 321–323 (GIV) contribute to the substrate site.

The protein belongs to the succinate/malate CoA ligase beta subunit family. In terms of assembly, heterotetramer of two alpha and two beta subunits. Mg(2+) is required as a cofactor.

The catalysed reaction is succinate + ATP + CoA = succinyl-CoA + ADP + phosphate. It catalyses the reaction GTP + succinate + CoA = succinyl-CoA + GDP + phosphate. The protein operates within carbohydrate metabolism; tricarboxylic acid cycle; succinate from succinyl-CoA (ligase route): step 1/1. Succinyl-CoA synthetase functions in the citric acid cycle (TCA), coupling the hydrolysis of succinyl-CoA to the synthesis of either ATP or GTP and thus represents the only step of substrate-level phosphorylation in the TCA. The beta subunit provides nucleotide specificity of the enzyme and binds the substrate succinate, while the binding sites for coenzyme A and phosphate are found in the alpha subunit. The polypeptide is Succinate--CoA ligase [ADP-forming] subunit beta (Shewanella denitrificans (strain OS217 / ATCC BAA-1090 / DSM 15013)).